A 61-amino-acid polypeptide reads, in one-letter code: Photosystem II reaction center protein K (61 aa).

Positions 1–24 (MPNILSLTCICFNSVLCPTSFFFA) are excised as a propeptide. A helical membrane pass occupies residues 32-52 (IFNPIVDVMPVIPVLFFLLAF).

The protein belongs to the PsbK family. In terms of assembly, PSII is composed of 1 copy each of membrane proteins PsbA, PsbB, PsbC, PsbD, PsbE, PsbF, PsbH, PsbI, PsbJ, PsbK, PsbL, PsbM, PsbT, PsbX, PsbY, PsbZ, Psb30/Ycf12, at least 3 peripheral proteins of the oxygen-evolving complex and a large number of cofactors. It forms dimeric complexes.

It is found in the plastid. The protein resides in the chloroplast thylakoid membrane. Functionally, one of the components of the core complex of photosystem II (PSII). PSII is a light-driven water:plastoquinone oxidoreductase that uses light energy to abstract electrons from H(2)O, generating O(2) and a proton gradient subsequently used for ATP formation. It consists of a core antenna complex that captures photons, and an electron transfer chain that converts photonic excitation into a charge separation. The protein is Photosystem II reaction center protein K of Sorghum bicolor (Sorghum).